Consider the following 130-residue polypeptide: Small ribosomal subunit protein uS9 (130 aa).

This sequence belongs to the universal ribosomal protein uS9 family.

In Shewanella baltica (strain OS155 / ATCC BAA-1091), this protein is Small ribosomal subunit protein uS9.